Here is a 131-residue protein sequence, read N- to C-terminus: QADGAKIYAQCAGCHQQNGQGIPGAFPPLAGHVAEILAKEGGREYLILVLLYGLQGQIEVKGMKYNGVMSSFAQLKDEEIAAVLNHIATAWGDAKKVKGFKPFTAEEVKKLRAKKLTPQQVLAERKKLGLK.

C11, C14, H15, and M69 together coordinate heme c.

Post-translationally, binds 1 heme c group covalently per subunit.

Functionally, this monoheme basic protein appears to function as an electron donor to cytochrome oxidase in T.thermophilus. This is Cytochrome c-552 (cycA) from Thermus thermophilus.